We begin with the raw amino-acid sequence, 211 residues long: tRNA (guanine-N(7)-)-methyltransferase (211 aa).

Residues Glu-44, Asp-69, Asp-96, and Asp-118 each contribute to the S-adenosyl-L-methionine site. Residue Asp-118 is part of the active site. Lys-122 is a substrate binding site. The interval 124-129 (RHEKRR) is interaction with RNA. Substrate-binding positions include Asp-154 and 191-194 (TEYE).

It belongs to the class I-like SAM-binding methyltransferase superfamily. TrmB family.

It carries out the reaction guanosine(46) in tRNA + S-adenosyl-L-methionine = N(7)-methylguanosine(46) in tRNA + S-adenosyl-L-homocysteine. It functions in the pathway tRNA modification; N(7)-methylguanine-tRNA biosynthesis. Catalyzes the formation of N(7)-methylguanine at position 46 (m7G46) in tRNA. The protein is tRNA (guanine-N(7)-)-methyltransferase of Streptococcus equi subsp. equi (strain 4047).